The primary structure comprises 210 residues: Protein RFS1 (210 aa).

One can recognise a Flavodoxin-like domain in the interval 4–203 (VAILIYSVDD…RVHQLQGKAF (200 aa)).

This sequence belongs to the WrbA family.

It localises to the cytoplasm. It is found in the membrane raft. This chain is Protein RFS1 (RFS1), found in Saccharomyces cerevisiae (strain ATCC 204508 / S288c) (Baker's yeast).